Here is a 225-residue protein sequence, read N- to C-terminus: Small ribosomal subunit protein uS3 (225 aa).

The KH type-2 domain occupies 16 to 85 (VYEYLVKETE…TPQIEVKDVK (70 aa)). Residues 200 to 225 (GENVGTESETDKADEQGREAANTEES) form a disordered region. Residues 208-217 (ETDKADEQGR) show a composition bias toward basic and acidic residues.

Belongs to the universal ribosomal protein uS3 family. As to quaternary structure, part of the 30S ribosomal subunit.

In terms of biological role, binds the lower part of the 30S subunit head. The polypeptide is Small ribosomal subunit protein uS3 (Thermoplasma volcanium (strain ATCC 51530 / DSM 4299 / JCM 9571 / NBRC 15438 / GSS1)).